A 132-amino-acid chain; its full sequence is Small ribosomal subunit protein uS8 (132 aa).

This sequence belongs to the universal ribosomal protein uS8 family. Part of the 30S ribosomal subunit. Contacts proteins S5 and S12.

Its function is as follows. One of the primary rRNA binding proteins, it binds directly to 16S rRNA central domain where it helps coordinate assembly of the platform of the 30S subunit. The chain is Small ribosomal subunit protein uS8 from Halothermothrix orenii (strain H 168 / OCM 544 / DSM 9562).